A 250-amino-acid polypeptide reads, in one-letter code: MACWWPLLLELWTVMPTWAGDELLNICMNAKHHKRVPSPEDKLYEECIPWKDNACCTLTTSWEAHLDVSPLYNFSLFHCGLLMPGCRKHFIQAICFYECSPNLGPWIQPVGSLGWEVAPSGQGERVVNVPLCQEDCEEWWEDCRMSYTCKSNWRGGWDWSQGKNRCPKGAQCLPFSHYFPTPADLCEKTWSNSFKASPERRNSGRCLQKWFEPAQGNPNVAVARLFASSAPSWELSYTIMVCSLFLPFLS.

The first 19 residues, 1-19 (MACWWPLLLELWTVMPTWA), serve as a signal peptide directing secretion. 8 disulfides stabilise this stretch: C27-C55, C47-C95, C56-C99, C79-C172, C86-C143, C132-C206, C136-C186, and C149-C166. The segment at 62–81 (WEAHLDVSPLYNFSLFHCGL) is important for interaction with IZUMO1. N-linked (GlcNAc...) asparagine glycosylation is present at N73. S228 carries the GPI-anchor amidated serine lipid modification. The propeptide occupies 229–250 (SAPSWELSYTIMVCSLFLPFLS).

Belongs to the folate receptor family. In terms of assembly, monomer. Interacts with IZUMO1; the interaction is direct. IZUMO1 and IZUMO1R/JUNO form a complex with 1:1 stoichiometry. Interacts with FCRL3/MAIA; FCRL3/MAIA replaces IZUMO1R/JUNO as IZUMO1 receptor after sperm-egg adhesion, thereby permitting species-specific gamete fusion. Interacts with WDR54. In terms of processing, the protein is rapidly cleaved following fertilization, being only weakly detectable in zona-intact fertilized eggs at telophase II and undetectable at the pronuclear stage. Sheding is probably required to block to polyspermy and ensuring egg fusion with a single sperm. In terms of tissue distribution, expressed in unfertilized oocytes (at protein level).

The protein resides in the cell membrane. Its subcellular location is the cell projection. It localises to the microvillus membrane. Its function is as follows. Receptor for IZUMO1 present at the cell surface of oocytes (oolemma), which is essential for species-specific gamete recognition and fertilization. The IZUMO1:IZUMO1R/JUNO interaction is a necessary adhesion event between sperm and egg that is required for fertilization but is not sufficient for cell fusion. The ligand-receptor interaction probably does not act as a membrane 'fusogen'. Does not bind folate. In Homo sapiens (Human), this protein is Sperm-egg fusion protein Juno.